Reading from the N-terminus, the 431-residue chain is Serine/threonine-protein kinase SSN3 (431 aa).

Residues 27 to 355 (YQIIGYIAAG…ADNALVHPYF (329 aa)) enclose the Protein kinase domain. ATP is bound by residues 33 to 41 (IAAGTYGKV) and K59. The active-site Proton acceptor is D174. The interval 397-431 (RHGGAYDDQHNNSNNNTNNSLNANNANNVPRKRAR) is disordered. The segment covering 407–424 (NNSNNNTNNSLNANNANN) has biased composition (low complexity).

It belongs to the protein kinase superfamily. CMGC Ser/Thr protein kinase family. CDC2/CDKX subfamily. As to quaternary structure, component of the srb8-11 complex, a regulatory module of the Mediator complex. It depends on Mg(2+) as a cofactor.

Its subcellular location is the nucleus. The enzyme catalyses L-seryl-[protein] + ATP = O-phospho-L-seryl-[protein] + ADP + H(+). The catalysed reaction is L-threonyl-[protein] + ATP = O-phospho-L-threonyl-[protein] + ADP + H(+). It carries out the reaction [DNA-directed RNA polymerase] + ATP = phospho-[DNA-directed RNA polymerase] + ADP + H(+). Functionally, component of the srb8-11 complex. The srb8-11 complex is a regulatory module of the Mediator complex which is itself dependent transcription. The srb8-11 complex may be involved in the transcriptional repression of a subset of genes regulated by Mediator. It may inhibit the association of the Mediator complex with RNA polymerase II to form the holoenzyme complex. The srb8-11 complex phosphorylates the C-terminal domain (CTD) of the largest subunit of RNA polymerase II. In Scheffersomyces stipitis (strain ATCC 58785 / CBS 6054 / NBRC 10063 / NRRL Y-11545) (Yeast), this protein is Serine/threonine-protein kinase SSN3 (SSN3).